Reading from the N-terminus, the 181-residue chain is Oligoribonuclease (181 aa).

An Exonuclease domain is found at 8-171 (LIWIDLEMTG…QDIQESIAEL (164 aa)). Y129 is an active-site residue.

This sequence belongs to the oligoribonuclease family.

Its subcellular location is the cytoplasm. Its function is as follows. 3'-to-5' exoribonuclease specific for small oligoribonucleotides. The protein is Oligoribonuclease of Shewanella oneidensis (strain ATCC 700550 / JCM 31522 / CIP 106686 / LMG 19005 / NCIMB 14063 / MR-1).